The sequence spans 338 residues: Extracellular globin (338 aa).

Positions 1–18 (MRSLLLLSIVFFVVTVSA) are cleaved as a signal peptide. Residue Asn19 is glycosylated (N-linked (GlcNAc...) asparagine). 2 Globin domains span residues 25–167 (CMKS…KHGR) and 174–316 (CMRS…RHGK). Residues Gln82 and His114 each coordinate heme b. The N-linked (GlcNAc...) asparagine glycan is linked to Asn216. Residues Gln231 and His263 each coordinate heme b. The interval 313 to 338 (RHGKEHHEHKEEHKEEHKEEHKEEQH) is disordered.

The protein belongs to the globin family. In terms of assembly, homooctamer.

It localises to the secreted. It is found in the extracellular space. Functionally, has an extremely high oxygen affinity. In a vacuum, it takes several minutes to release its oxygen compared to milliseconds for a normal globin. Could be used as an oxygen scavenger for sterol biosynthesis. This Ascaris suum (Pig roundworm) protein is Extracellular globin.